Reading from the N-terminus, the 143-residue chain is Hemoglobin subunit alpha-2 (143 aa).

Ser-2 carries the post-translational modification N-acetylserine. The Globin domain occupies 2-143 (SLTEKDKAAV…LSLALAEKYR (142 aa)). His-60 is an O2 binding site. His-89 contacts heme b.

This sequence belongs to the globin family. As to quaternary structure, hb2 is a heterotetramer of two alpha-2 chains and two beta-1 chains; Hb3 is a heterotetramer of two alpha-2 chains and two beta-2 chains. In terms of tissue distribution, red blood cells.

Involved in oxygen transport from gills to the various peripheral tissues. The chain is Hemoglobin subunit alpha-2 (hba2) from Anarhichas minor (Arctic spotted wolffish).